The primary structure comprises 219 residues: Probable GTP-binding protein EngB (219 aa).

The 175-residue stretch at 31 to 205 folds into the EngB-type G domain; it reads VGVEIAFAGR…LSILNEWCHP (175 aa). Residues 39 to 46, 66 to 70, 84 to 87, 151 to 154, and 184 to 186 contribute to the GTP site; these read GRSNAGKS, GRTQL, DLPG, TKSD, and FSS. Positions 46 and 68 each coordinate Mg(2+).

The protein belongs to the TRAFAC class TrmE-Era-EngA-EngB-Septin-like GTPase superfamily. EngB GTPase family. Mg(2+) serves as cofactor.

Functionally, necessary for normal cell division and for the maintenance of normal septation. The polypeptide is Probable GTP-binding protein EngB (Shewanella denitrificans (strain OS217 / ATCC BAA-1090 / DSM 15013)).